A 346-amino-acid polypeptide reads, in one-letter code: tRNA N6-adenosine threonylcarbamoyltransferase (346 aa).

Fe cation contacts are provided by H111 and H115. Substrate contacts are provided by residues 134-138 (LVSGG), D167, G180, and N279. Fe cation is bound at residue D307.

Belongs to the KAE1 / TsaD family. It depends on Fe(2+) as a cofactor.

It is found in the cytoplasm. The catalysed reaction is L-threonylcarbamoyladenylate + adenosine(37) in tRNA = N(6)-L-threonylcarbamoyladenosine(37) in tRNA + AMP + H(+). In terms of biological role, required for the formation of a threonylcarbamoyl group on adenosine at position 37 (t(6)A37) in tRNAs that read codons beginning with adenine. Is involved in the transfer of the threonylcarbamoyl moiety of threonylcarbamoyl-AMP (TC-AMP) to the N6 group of A37, together with TsaE and TsaB. TsaD likely plays a direct catalytic role in this reaction. The protein is tRNA N6-adenosine threonylcarbamoyltransferase of Burkholderia mallei (strain ATCC 23344).